Here is a 364-residue protein sequence, read N- to C-terminus: tRNA 2-selenouridine synthase (364 aa).

Residues 14–137 (LIADTPIIDV…LRQTAIQATI (124 aa)) form the Rhodanese domain. Cys97 functions as the S-selanylcysteine intermediate in the catalytic mechanism.

It belongs to the SelU family. In terms of assembly, monomer.

It carries out the reaction 5-methylaminomethyl-2-thiouridine(34) in tRNA + selenophosphate + (2E)-geranyl diphosphate + H2O + H(+) = 5-methylaminomethyl-2-selenouridine(34) in tRNA + (2E)-thiogeraniol + phosphate + diphosphate. It catalyses the reaction 5-methylaminomethyl-2-thiouridine(34) in tRNA + (2E)-geranyl diphosphate = 5-methylaminomethyl-S-(2E)-geranyl-thiouridine(34) in tRNA + diphosphate. The catalysed reaction is 5-methylaminomethyl-S-(2E)-geranyl-thiouridine(34) in tRNA + selenophosphate + H(+) = 5-methylaminomethyl-2-(Se-phospho)selenouridine(34) in tRNA + (2E)-thiogeraniol. The enzyme catalyses 5-methylaminomethyl-2-(Se-phospho)selenouridine(34) in tRNA + H2O = 5-methylaminomethyl-2-selenouridine(34) in tRNA + phosphate. In terms of biological role, involved in the post-transcriptional modification of the uridine at the wobble position (U34) of tRNA(Lys), tRNA(Glu) and tRNA(Gln). Catalyzes the conversion of 2-thiouridine (S2U-RNA) to 2-selenouridine (Se2U-RNA). Acts in a two-step process involving geranylation of 2-thiouridine (S2U) to S-geranyl-2-thiouridine (geS2U) and subsequent selenation of the latter derivative to 2-selenouridine (Se2U) in the tRNA chain. The protein is tRNA 2-selenouridine synthase of Escherichia fergusonii (strain ATCC 35469 / DSM 13698 / CCUG 18766 / IAM 14443 / JCM 21226 / LMG 7866 / NBRC 102419 / NCTC 12128 / CDC 0568-73).